Consider the following 240-residue polypeptide: Homeobox-leucine zipper protein HOX14 (240 aa).

The interval 26-64 is disordered; it reads SGEVQGERPRARRRRRRGARCVGGGGGGGEVDGGDPKKR. The segment covering 35-44 has biased composition (basic residues); the sequence is RARRRRRRGA. A compositionally biased stretch (gly residues) spans 46 to 56; it reads CVGGGGGGGEV. The homeobox DNA-binding region spans 59–118; the sequence is GDPKKRRLSDEQVEMLELSFREERKLETGRKVHLASELGLDPKQVAVWFQNRRARHKSKL. A coiled-coil region spans residues 108–167; that stretch reads QNRRARHKSKLLEEEFSKLKHAHDAAILHKCHLENEVLRLKERLVVAEEEVRRLRSAAGS.

Belongs to the HD-ZIP homeobox family. Class I subfamily. Expressed in roots, stems, leaf blades and panicles.

It localises to the nucleus. Its function is as follows. Probable transcription factor. The protein is Homeobox-leucine zipper protein HOX14 (HOX14) of Oryza sativa subsp. japonica (Rice).